An 81-amino-acid chain; its full sequence is RNA-binding protein Hfq (81 aa).

The Sm domain occupies 11–71 (DIFLNNARKN…ISTITPTKPI (61 aa)).

The protein belongs to the Hfq family. Homohexamer.

In terms of biological role, RNA chaperone that binds small regulatory RNA (sRNAs) and mRNAs to facilitate mRNA translational regulation in response to envelope stress, environmental stress and changes in metabolite concentrations. Also binds with high specificity to tRNAs. In Clostridium beijerinckii (strain ATCC 51743 / NCIMB 8052) (Clostridium acetobutylicum), this protein is RNA-binding protein Hfq.